Reading from the N-terminus, the 231-residue chain is 5'-methylthioadenosine/S-adenosylhomocysteine nucleosidase (231 aa).

Residue Glu-13 is the Proton acceptor of the active site. Residues Gly-79, Met-154, and 175–176 (ME) contribute to the substrate site. Catalysis depends on Asp-199, which acts as the Proton donor.

Belongs to the PNP/UDP phosphorylase family. MtnN subfamily.

It carries out the reaction S-adenosyl-L-homocysteine + H2O = S-(5-deoxy-D-ribos-5-yl)-L-homocysteine + adenine. The enzyme catalyses S-methyl-5'-thioadenosine + H2O = 5-(methylsulfanyl)-D-ribose + adenine. It catalyses the reaction 5'-deoxyadenosine + H2O = 5-deoxy-D-ribose + adenine. The protein operates within amino-acid biosynthesis; L-methionine biosynthesis via salvage pathway; S-methyl-5-thio-alpha-D-ribose 1-phosphate from S-methyl-5'-thioadenosine (hydrolase route): step 1/2. Catalyzes the irreversible cleavage of the glycosidic bond in both 5'-methylthioadenosine (MTA) and S-adenosylhomocysteine (SAH/AdoHcy) to adenine and the corresponding thioribose, 5'-methylthioribose and S-ribosylhomocysteine, respectively. Also cleaves 5'-deoxyadenosine, a toxic by-product of radical S-adenosylmethionine (SAM) enzymes, into 5-deoxyribose and adenine. This is 5'-methylthioadenosine/S-adenosylhomocysteine nucleosidase from Marinomonas sp. (strain MWYL1).